The primary structure comprises 1236 residues: DNA-directed RNA polymerase subunit beta (1236 aa).

The disordered stretch occupies residues 1193–1212 (PDVLDDDSYDQNNDEDIDEI). The segment covering 1194–1212 (DVLDDDSYDQNNDEDIDEI) has biased composition (acidic residues).

It belongs to the RNA polymerase beta chain family. In terms of assembly, the RNAP catalytic core consists of 2 alpha, 1 beta, 1 beta' and 1 omega subunit. When a sigma factor is associated with the core the holoenzyme is formed, which can initiate transcription.

It catalyses the reaction RNA(n) + a ribonucleoside 5'-triphosphate = RNA(n+1) + diphosphate. Its function is as follows. DNA-dependent RNA polymerase catalyzes the transcription of DNA into RNA using the four ribonucleoside triphosphates as substrates. The chain is DNA-directed RNA polymerase subunit beta from Clostridium beijerinckii (strain ATCC 51743 / NCIMB 8052) (Clostridium acetobutylicum).